Consider the following 366-residue polypeptide: Terpene cyclase atmA (366 aa).

Helical transmembrane passes span 9–29, 84–104, 113–133, 162–182, 195–215, 233–253, 291–311, and 333–353; these read FLLLAMTSFYMMYISLFNNGF, LTGLSFSGGMVGIWMIVVVHI, GMVITLIVGIAQQAVGPGIVI, GLVVSMIMSYIFPLVIMSLPA, IAAWQGWPVYFVIIMTTHHLF, VYHFGFACSCLCHMAWLSAFV, AGLFTFLQWDYCVAAAATMVW, and ILRLLGWILIDGPSATAVRLI.

This sequence belongs to the membrane-bound ascI terpene cyclase family.

It localises to the membrane. Aflatrem synthesis protein A; part of the ATM2 gene cluster that mediates the biosynthesis of aflatrem, a tremorgenic mycotoxin with acute neurotoxic effects. Synthesis of geranylgeranyl diphosphate (GGPP) by AtmG (a GGPP synthase) precedes condensation of GGPP with indole 3-glycerol phosphate, followed by epoxidation and cyclization by AtmM (a FAD-dependent monooxygenase) and AtmC (a prenyltransferase) to produce paspaline. AtmB is also essential for paspaline production, but its exact role has not been identified yet. AtmP, a cytochrome P450 monooxygenase, subsequently converts paspaline to 13-desoxypaxilline via PC-M6 by removal of the C-30 methyl group and oxidation at C-10. AtmQ, a cytochrome P450 monooxygenase, then catalyzes the oxidation of 13-desoxypaxilline, first at C-7 to produce paspalicine and then at C-13 to form paspalinine. Finally, AtmD prenylates paspalinine to form aflatrem. The role of atmA in the aflatrem biosynthesis is still unknown. This is Terpene cyclase atmA from Aspergillus flavus.